A 432-amino-acid chain; its full sequence is Nuclear pore complex-interacting protein family member B9 (432 aa).

Disordered regions lie at residues 260 to 280 (RMGR…NSLS) and 353 to 420 (SPLP…LRTR). The span at 270–280 (QQHSITDNSLS) shows a compositional bias: polar residues. Positions 374 to 402 (EVEKPPKPKRWRVDEVEQSPKPKRQREAE) are enriched in basic and acidic residues. Basic residues predominate over residues 408 to 420 (KPKRRRLSKLRTR).

It belongs to the NPIP family.

This is Nuclear pore complex-interacting protein family member B9 (NPIPB9) from Homo sapiens (Human).